The primary structure comprises 461 residues: UDP-glycosyltransferase 88B1 (461 aa).

UDP-alpha-D-glucose-binding positions include Ser278, 340 to 341, 358 to 366, and 380 to 383; these read WA, HCGWNSSLE, and YAEQ.

The protein belongs to the UDP-glycosyltransferase family.

Functionally, may glycosylate diterpenes or flavonols in leaves. This is UDP-glycosyltransferase 88B1 from Stevia rebaudiana (Stevia).